The chain runs to 372 residues: Cytochrome b (372 aa).

The next 4 membrane-spanning stretches (helical) occupy residues 25–45 (FGSM…FLAI), 69–90 (WIMQ…YIHI), 105–125 (WLSG…GYVL), and 170–190 (FFAL…IHII). Residues H75 and H89 each contribute to the heme b site. Residues H174 and H188 each coordinate heme b. H193 provides a ligand contact to a ubiquinone. 4 helical membrane passes run 218–238 (YKDM…LSFS), 280–300 (LGGT…PFTH), 312–332 (LSQI…WTAT), and 339–358 (FISI…IMNP).

It belongs to the cytochrome b family. As to quaternary structure, the cytochrome bc1 complex contains 3 respiratory subunits (MT-CYB, CYC1 and UQCRFS1), 2 core proteins (UQCRC1 and UQCRC2) and probably 6 low-molecular weight proteins. The cofactor is heme b.

The protein localises to the mitochondrion inner membrane. In terms of biological role, component of the ubiquinol-cytochrome c reductase complex (complex III or cytochrome b-c1 complex) that is part of the mitochondrial respiratory chain. The b-c1 complex mediates electron transfer from ubiquinol to cytochrome c. Contributes to the generation of a proton gradient across the mitochondrial membrane that is then used for ATP synthesis. In Walterinnesia aegyptia (Desert black snake), this protein is Cytochrome b (MT-CYB).